The following is a 186-amino-acid chain: Alkyl hydroperoxide reductase AhpD (186 aa).

Cys132 (proton donor) is an active-site residue. Cys132 and Cys135 are oxidised to a cystine. The Cysteine sulfenic acid (-SOH) intermediate role is filled by Cys135.

Belongs to the AhpD family.

The catalysed reaction is N(6)-[(R)-dihydrolipoyl]-L-lysyl-[lipoyl-carrier protein] + a hydroperoxide = N(6)-[(R)-lipoyl]-L-lysyl-[lipoyl-carrier protein] + an alcohol + H2O. Antioxidant protein with alkyl hydroperoxidase activity. Required for the reduction of the AhpC active site cysteine residues and for the regeneration of the AhpC enzyme activity. In Anaeromyxobacter dehalogenans (strain 2CP-C), this protein is Alkyl hydroperoxide reductase AhpD.